Here is a 427-residue protein sequence, read N- to C-terminus: Glucan 1,3-beta-glucosidase 2 (427 aa).

The signal sequence occupies residues Met-1 to Ala-17. Residue Glu-217 is the Proton donor of the active site. Disulfide bonds link Cys-299–Cys-426 and Cys-324–Cys-355. Glu-316 (nucleophile) is an active-site residue.

The protein belongs to the glycosyl hydrolase 5 (cellulase A) family.

Its subcellular location is the secreted. The enzyme catalyses Successive hydrolysis of beta-D-glucose units from the non-reducing ends of (1-&gt;3)-beta-D-glucans, releasing alpha-glucose.. Functionally, beta-glucanases participate in the metabolism of beta-glucan, the main structural component of the cell wall. It could also function biosynthetically as a transglycosylase. This Wickerhamomyces anomalus (Yeast) protein is Glucan 1,3-beta-glucosidase 2 (EXG2).